Reading from the N-terminus, the 24-residue chain is 33.0 kDa cold shock protein (24 aa).

It belongs to the thaumatin family. Homooligomer; disulfide-linked. Glycosylated.

The protein localises to the secreted. Its subcellular location is the extracellular space. The protein resides in the apoplast. The polypeptide is 33.0 kDa cold shock protein (Arachis hypogaea (Peanut)).